We begin with the raw amino-acid sequence, 525 residues long: UPF0288 protein MM_0912 (525 aa).

The protein belongs to the UPF0288 family.

This chain is UPF0288 protein MM_0912, found in Methanosarcina mazei (strain ATCC BAA-159 / DSM 3647 / Goe1 / Go1 / JCM 11833 / OCM 88) (Methanosarcina frisia).